The sequence spans 448 residues: MNAQLKQLWTKTLNIIKGELTEVSFNTWIKSISPISMNENTIKLEVPNDFTRGILESRYKDLIINAIKLITSKKYNIEFSITSEEIFNNQQLKPKSSNDNIVVNDEMTSILNPKYTFDSFVIGNSNRFAHAASLAVAESPAKAYNPLFIYGGVGLGKTHLMHAIGHYILQNTPNAKVVYVSSEKFTNELINSIKDDKNEEFRNKYRNVDVLLIDDIQFIAGKERTQEEFFHTFNALYEADKQIILSSDRPPKEIPTLEDRLRSRFEWGLIADIQAPDFETRIAILKKKADVENLDIPNEVMVYIATKIKSNIRELEGALIRIVAYSSLTNREISVDLAAEALKDIISSEQNKQITIELIQDIVCNYFNLKIQELKSSRRTRNIAFPRQIAMYLSRKLTDMSLPKIGEEFGGRDHTTVIHAYEKISNILKKDESLRNVIDDLNKKITNN.

The segment at Met1–Lys73 is domain I, interacts with DnaA modulators. Residues Lys73 to Ser109 form a domain II region. Positions Ile110 to Ser326 are domain III, AAA+ region. ATP-binding residues include Gly154, Gly156, Lys157, and Thr158. The interval Ser327 to Asn448 is domain IV, binds dsDNA.

This sequence belongs to the DnaA family. In terms of assembly, oligomerizes as a right-handed, spiral filament on DNA at oriC.

The protein localises to the cytoplasm. Functionally, plays an essential role in the initiation and regulation of chromosomal replication. ATP-DnaA binds to the origin of replication (oriC) to initiate formation of the DNA replication initiation complex once per cell cycle. Binds the DnaA box (a 9 base pair repeat at the origin) and separates the double-stranded (ds)DNA. Forms a right-handed helical filament on oriC DNA; dsDNA binds to the exterior of the filament while single-stranded (ss)DNA is stabiized in the filament's interior. The ATP-DnaA-oriC complex binds and stabilizes one strand of the AT-rich DNA unwinding element (DUE), permitting loading of DNA polymerase. After initiation quickly degrades to an ADP-DnaA complex that is not apt for DNA replication. Binds acidic phospholipids. The chain is Chromosomal replication initiator protein DnaA from Clostridium novyi (strain NT).